The sequence spans 174 residues: Chaperonin-like RBCX protein 1, chloroplastic (174 aa).

The N-terminal 45 residues, 1-45 (MESSSSLLHHSYLSYLNPKFGKRPLVSYPLMQSSRKCKQTRICSN), are a transit peptide targeting the chloroplast.

It belongs to the RbcX family. As to quaternary structure, homodimer. Interacts with rbcL, atpB and THI1.

Its subcellular location is the plastid. The protein resides in the chloroplast. Chaperone involved in RuBisCO assembly process. In Arabidopsis thaliana (Mouse-ear cress), this protein is Chaperonin-like RBCX protein 1, chloroplastic.